The primary structure comprises 199 residues: Recombination protein RecR (199 aa).

The C4-type zinc finger occupies 56-71 (CRSCFNVAQSELCRIC). One can recognise a Toprim domain in the interval 79 to 174 (SSICVVEEPK…KVTRLASGLP (96 aa)).

This sequence belongs to the RecR family.

Its function is as follows. May play a role in DNA repair. It seems to be involved in an RecBC-independent recombinational process of DNA repair. It may act with RecF and RecO. The chain is Recombination protein RecR from Frankia casuarinae (strain DSM 45818 / CECT 9043 / HFP020203 / CcI3).